The sequence spans 386 residues: Microtubule-binding protein TANGLED1 (386 aa).

Disordered regions lie at residues 83-105, 140-202, 244-266, 303-330, and 345-386; these read RMRGGASAQKRSPSGKFGGGVGG, AAGA…RVRS, HASTSAATDPCATPSPSKKQKRL, PARPAAVSPPPPVKAQASPAKTRRCSFS, and RLSL…ISSR. The span at 170–180 shows a compositional bias: basic residues; that stretch reads RARRAREKQSH. Positions 181-193 are enriched in low complexity; the sequence is RGGAATRGADAAT. A compositionally biased stretch (polar residues) spans 375–386; sequence TVRTVSSKISSR.

Expressed in vegetative shoot tips consisting of leaf primordia and the bases of immature leaves, the shoot apical meristem, and unexpanded stem tissue. Strongly expressed in tissues enriched in dividing cells: ear primordia and embryos.

The protein resides in the cytoplasm. The protein localises to the cytoskeleton. It is found in the spindle. Its subcellular location is the phragmoplast. Its function is as follows. Is required for spatial control cell division during leaf development. Through an association with microtubules, acts both for the positioning of cytoskeletal arrays that establish planes of cell division during prophase and for spatial guidance of expanding phragmoplasts toward preestablished cortical division sites (CDS) during cytokinesis. This is Microtubule-binding protein TANGLED1 (TAN1) from Zea mays (Maize).